A 205-amino-acid chain; its full sequence is Potassium-transporting ATPase KdpC subunit (205 aa).

Residues Pro7 to Met27 traverse the membrane as a helical segment.

It belongs to the KdpC family. The system is composed of three essential subunits: KdpA, KdpB and KdpC.

Its subcellular location is the cell inner membrane. In terms of biological role, part of the high-affinity ATP-driven potassium transport (or Kdp) system, which catalyzes the hydrolysis of ATP coupled with the electrogenic transport of potassium into the cytoplasm. This subunit acts as a catalytic chaperone that increases the ATP-binding affinity of the ATP-hydrolyzing subunit KdpB by the formation of a transient KdpB/KdpC/ATP ternary complex. The sequence is that of Potassium-transporting ATPase KdpC subunit from Nitrobacter hamburgensis (strain DSM 10229 / NCIMB 13809 / X14).